We begin with the raw amino-acid sequence, 135 residues long: DNA-binding protein inhibitor ID-2-B (135 aa).

The 53-residue stretch at 23–75 (ARSKAPVDEPMSLLYNMNDCYSKLKELVPSIPPNKKVSKMEILQHVIDYILDL) folds into the bHLH domain. Residues 108 to 117 (LNTDISILSL) carry the Nuclear export signal motif.

In terms of assembly, heterodimer with other HLH proteins.

The protein resides in the cytoplasm. The protein localises to the nucleus. Its function is as follows. Transcriptional regulator (lacking a basic DNA binding domain) which negatively regulates the basic helix-loop-helix (bHLH) transcription factors by forming heterodimers and inhibiting their DNA binding and transcriptional activity. Inhibits the activity of both neurogenic (neurod1/neuroD) and myogenic (myod1/myoD) bHLH factors. May play a role in the regulation of the circadian clock. This is DNA-binding protein inhibitor ID-2-B (id2-b) from Xenopus laevis (African clawed frog).